The following is a 240-amino-acid chain: Ribosomal RNA large subunit methyltransferase E (240 aa).

Residues 1-20 (MSKAGGNKGGSRTGGRGGAG) are compositionally biased toward gly residues. Positions 1 to 33 (MSKAGGNKGGSRTGGRGGAGSSNLHVRVKKKAG) are disordered. S-adenosyl-L-methionine is bound by residues glycine 92, tryptophan 94, aspartate 115, aspartate 131, and aspartate 155. Catalysis depends on lysine 195, which acts as the Proton acceptor.

The protein belongs to the class I-like SAM-binding methyltransferase superfamily. RNA methyltransferase RlmE family.

It localises to the cytoplasm. It carries out the reaction uridine(2552) in 23S rRNA + S-adenosyl-L-methionine = 2'-O-methyluridine(2552) in 23S rRNA + S-adenosyl-L-homocysteine + H(+). Functionally, specifically methylates the uridine in position 2552 of 23S rRNA at the 2'-O position of the ribose in the fully assembled 50S ribosomal subunit. The polypeptide is Ribosomal RNA large subunit methyltransferase E (Brucella abortus (strain S19)).